A 507-amino-acid chain; its full sequence is Cytochrome P450 7B1 (507 aa).

3 helical membrane passes run 14–34 (PLAL…LFLL), 178–198 (IFAF…YGKI), and 287–307 (FLWA…YYIL). Cysteine 447 serves as a coordination point for heme.

It belongs to the cytochrome P450 family. Heme serves as cofactor. Highly expressed in brain structures including the corpus callosum, the anterior commissure and fornix. The hippocampal expression is particularly prominent in the dentate gyrus. Expressed in liver and kidney. The hepatic expression is sexually dimorphic, predominantly detected in male liver while barely detectable in females. Expressed in lymph nodes and spleens, in both lymphoid and stromal compartments. Higher expression is detected in fibroblastic reticular cells, a type of stromal cells in the lymph nodes. Also expressed at high levels in the outer follicle and at the B cell-T cell boundary of splenic germinal centers. Expressed in dendritic cells (DCs) subpopulations being most abundant in CD8-positive DCs.

The protein localises to the endoplasmic reticulum membrane. It is found in the microsome membrane. The catalysed reaction is 25-hydroxycholesterol + reduced [NADPH--hemoprotein reductase] + O2 = 7alpha,25-dihydroxycholesterol + oxidized [NADPH--hemoprotein reductase] + H2O + H(+). It carries out the reaction (25R)-cholest-5-ene-3beta,26-diol + reduced [NADPH--hemoprotein reductase] + O2 = (25R)-cholest-5-en-3beta,7alpha,26-triol + oxidized [NADPH--hemoprotein reductase] + H2O + H(+). It catalyses the reaction (24S)-hydroxycholesterol + reduced [NADPH--hemoprotein reductase] + O2 = (24S)-7alpha-dihydroxycholesterol + oxidized [NADPH--hemoprotein reductase] + H2O + H(+). The enzyme catalyses (24S)-25-epoxycholesterol + reduced [NADPH--hemoprotein reductase] + O2 = (24S,25)-epoxy-7alpha-hydroxycholesterol + oxidized [NADPH--hemoprotein reductase] + H2O + H(+). The catalysed reaction is (22R)-hydroxycholesterol + reduced [NADPH--hemoprotein reductase] + O2 = (22R,7alpha)-dihydroxycholesterol + oxidized [NADPH--hemoprotein reductase] + H2O + H(+). It carries out the reaction androst-5-en-3beta,17beta-diol + reduced [NADPH--hemoprotein reductase] + O2 = androst-5-en-3beta,7alpha,17beta-triol + oxidized [NADPH--hemoprotein reductase] + H2O + H(+). It catalyses the reaction 5alpha-androstane-3beta,17beta-diol + reduced [NADPH--hemoprotein reductase] + O2 = 5alpha-androstane-3beta,6alpha,17beta-triol + oxidized [NADPH--hemoprotein reductase] + H2O + H(+). The enzyme catalyses 3beta-hydroxyandrost-5-en-17-one + reduced [NADPH--hemoprotein reductase] + O2 = 3beta,7alpha-dihydroxyandrost-5-en-17-one + oxidized [NADPH--hemoprotein reductase] + H2O + H(+). The catalysed reaction is 3beta-hydroxy-5alpha-androstan-17-one + reduced [NADPH--hemoprotein reductase] + O2 = 3beta,7alpha-dihydroxy-5alpha-androstan-17-one + oxidized [NADPH--hemoprotein reductase] + H2O + H(+). It carries out the reaction pregnenolone + reduced [NADPH--hemoprotein reductase] + O2 = 7alpha-hydroxypregnenolone + oxidized [NADPH--hemoprotein reductase] + H2O + H(+). It functions in the pathway lipid metabolism; bile acid biosynthesis. The protein operates within steroid hormone biosynthesis. With respect to regulation, inhibited by drugs voriconazole and metyrapone. Its function is as follows. A cytochrome P450 monooxygenase involved in the metabolism of endogenous oxysterols and steroid hormones, including neurosteroids. Mechanistically, uses molecular oxygen inserting one oxygen atom into a substrate, and reducing the second into a water molecule, with two electrons provided by NADPH via cytochrome P450 reductase (CPR; NADPH-ferrihemoprotein reductase). Catalyzes the hydroxylation of carbon hydrogen bonds of steroids with a preference for 7-alpha position. Usually metabolizes steroids carrying a hydroxy group at position 3, functioning as a 3-hydroxy steroid 7-alpha hydroxylase. Hydroxylates oxysterols, including 25-hydroxycholesterol and (25R)-cholest-5-ene-3beta,26-diol toward 7-alpha hydroxy derivatives, which may be transported to the liver and converted to bile acids. Via its product 7-alpha,25-dihydroxycholesterol, a ligand for the chemotactic G protein-coupled receptor GPR183/EBI2, regulates B cell migration in germinal centers of lymphoid organs, thus guiding efficient maturation of plasma B cells and overall antigen-specific humoral immune response. 7-alpha hydroxylates neurosteroids, including 3beta-hydroxyandrost-5-en-17-one (dehydroepiandrosterone) and pregnenolone, both involved in hippocampus-associated memory and learning. Metabolizes androstanoids toward 6- or 7-alpha hydroxy derivatives. The protein is Cytochrome P450 7B1 of Mus musculus (Mouse).